Reading from the N-terminus, the 124-residue chain is Fluoride-specific ion channel FluC (124 aa).

A run of 4 helical transmembrane segments spans residues 1–21, 36–56, 70–90, and 100–120; these read MLNTLVVFLGAGLGGALRYGV, TMIINVSGSLAMGILAGWFVV, TGILGGFTTFSTFSLEAFLLI, and LYVIGSVAAGIAGVAVSFAII. Na(+) contacts are provided by Gly-74 and Thr-77.

The protein belongs to the fluoride channel Fluc/FEX (TC 1.A.43) family.

The protein localises to the cell inner membrane. It catalyses the reaction fluoride(in) = fluoride(out). With respect to regulation, na(+) is not transported, but it plays an essential structural role and its presence is essential for fluoride channel function. Fluoride-specific ion channel. Important for reducing fluoride concentration in the cell, thus reducing its toxicity. The polypeptide is Fluoride-specific ion channel FluC (Methylobacterium sp. (strain 4-46)).